The chain runs to 485 residues: E3 ubiquitin-protein ligase TRIM34B (485 aa).

The RING-type zinc-finger motif lies at 15 to 58 (CPVCQELLTKALSLGCGHLVCQACLISNKNAVINPRGKSSCPVC). The B box-type zinc finger occupies 91–127 (TKRDLCVHHGEKLLLFCKEDKKVICWVCERSQEHRGH). 4 residues coordinate Zn(2+): C96, H99, C118, and H124. Residues 136-170 (VRECQENLQKALTRLRKEQEKVETLEADIKEDRLS) adopt a coiled-coil conformation. Positions 282 to 485 (LSGMLQKFRE…APMTLCPLNS (204 aa)) constitute a B30.2/SPRY domain.

The protein belongs to the TRIM/RBCC family. As to quaternary structure, homotrimer. Interacts (via B-box and SPRY domain) with TRIM5.

It localises to the cytoplasm. The protein localises to the mitochondrion. The catalysed reaction is S-ubiquitinyl-[E2 ubiquitin-conjugating enzyme]-L-cysteine + [acceptor protein]-L-lysine = [E2 ubiquitin-conjugating enzyme]-L-cysteine + N(6)-ubiquitinyl-[acceptor protein]-L-lysine.. The protein operates within protein modification; protein ubiquitination. Functions as antiviral protein and contributes to the defense against retroviral infections. Acts as a capsid-specific restriction factor with the help of TRIM5 and prevents infection from non-host-adapted retroviruses. During influenza A virus infection, promotes programmed cell death by targeting ZBP1 for 'Lys-63'-linked polyubiquitination. In turn, promotes ZBP1 recruitment of RIPK3 to mediate virus-induced programmed necrosis. Negatively regulates the function of mitochondria by enhancing mitochondrial depolarization leading to cytochrome c release and mitochondria-dependent apoptosis. Also promotes the formation of multinucleated giant cells by means of cell fusion and phagocytosis in epithelial cells. Regulates intestinal inflammation by controlling the exocytosis of the major component of colonic mucus MUC2 from colonic goblet cells. The chain is E3 ubiquitin-protein ligase TRIM34B from Mus musculus (Mouse).